Consider the following 188-residue polypeptide: Translation initiation factor IF-3 (188 aa).

Belongs to the IF-3 family. In terms of assembly, monomer.

The protein resides in the cytoplasm. IF-3 binds to the 30S ribosomal subunit and shifts the equilibrium between 70S ribosomes and their 50S and 30S subunits in favor of the free subunits, thus enhancing the availability of 30S subunits on which protein synthesis initiation begins. The chain is Translation initiation factor IF-3 from Fusobacterium nucleatum subsp. nucleatum (strain ATCC 25586 / DSM 15643 / BCRC 10681 / CIP 101130 / JCM 8532 / KCTC 2640 / LMG 13131 / VPI 4355).